We begin with the raw amino-acid sequence, 849 residues long: Protein lap1 (849 aa).

LRR repeat units follow at residues valine 18 to glutamate 39, threonine 41 to cysteine 62, glycine 64 to leucine 85, glutamine 87 to cysteine 108, histidine 110 to leucine 131, serine 133 to valine 155, asparagine 156 to leucine 177, asparagine 179 to leucine 200, serine 202 to arginine 224, aspartate 225 to tryptophan 246, asparagine 248 to leucine 269, serine 271 to leucine 292, glutamine 294 to leucine 315, serine 317 to cysteine 338, glutamine 340 to serine 362, lysine 363 to leucine 384, and asparagine 386 to aspartate 407. The tract at residues asparagine 716–lysine 752 is disordered. Positions asparagine 725 to aspartate 735 are enriched in acidic residues. Residues threonine 736 to lysine 752 show a composition bias toward polar residues. One can recognise a PDZ domain in the interval valine 770–lysine 849.

It belongs to the LAP (LRR and PDZ) protein family.

In terms of biological role, may have a role in assembling adherens junctions. This is Protein lap1 from Drosophila melanogaster (Fruit fly).